The primary structure comprises 324 residues: 4-hydroxyphenylpyruvate 3-dimethylallyltransferase (324 aa).

2 residues coordinate substrate: R160 and E281.

It belongs to the aromatic prenyltransferase family. In terms of assembly, monomer.

The catalysed reaction is 3-(4-hydroxyphenyl)pyruvate + dimethylallyl diphosphate = 3-dimethylallyl-4-hydroxyphenylpyruvate + diphosphate. Its pathway is antibiotic biosynthesis. In terms of biological role, magnesium-independent aromatic prenyltransferase that catalyzes the irreversible transfer of a dimethylallyl group to 4-hydroxyphenylpyruvate to produce the ring A structure in the clorobiocin biosynthesis pathway. Clorobiocin is an aminocoumarin family antibiotic. In Streptomyces roseochromogenus subsp. oscitans, this protein is 4-hydroxyphenylpyruvate 3-dimethylallyltransferase.